The primary structure comprises 602 residues: GTP-binding protein 2 (602 aa).

A disordered region spans residues 18 to 64; the sequence is GPAMGGNLKARGAGGSSSCGGPKGKKKNGRNRGGKANNPPYLPPEAE. The segment covering 29 to 39 has biased composition (gly residues); it reads GAGGSSSCGGP. The span at 40–50 shows a compositional bias: basic residues; that stretch reads KGKKKNGRNRG. One can recognise a tr-type G domain in the interval 170–398; sequence FLDLRVAVLG…LNILPPLTNS (229 aa). Residues 179–186, 260–264, and 316–319 contribute to the GTP site; these read GNVDSGKS, DLAGH, and SKVD.

The protein belongs to the TRAFAC class translation factor GTPase superfamily. Classic translation factor GTPase family. GTPBP1 subfamily. As to expression, predominantly expressed in thymus, spleen, and testis. Expressed at lower levels in brain, heart, lung, kidney, and skeletal muscle. In testis, specifically expressed in spermatocytes and round spermatids.

The polypeptide is GTP-binding protein 2 (Mus musculus (Mouse)).